Consider the following 596-residue polypeptide: Elongation factor 4 (596 aa).

Residues 2–184 enclose the tr-type G domain; it reads KHIRNFSIIA…TIVAQIPSPE (183 aa). Residues 14–19 and 131–134 each bind GTP; these read DHGKST and NKID.

The protein belongs to the TRAFAC class translation factor GTPase superfamily. Classic translation factor GTPase family. LepA subfamily.

The protein resides in the cell inner membrane. It catalyses the reaction GTP + H2O = GDP + phosphate + H(+). Required for accurate and efficient protein synthesis under certain stress conditions. May act as a fidelity factor of the translation reaction, by catalyzing a one-codon backward translocation of tRNAs on improperly translocated ribosomes. Back-translocation proceeds from a post-translocation (POST) complex to a pre-translocation (PRE) complex, thus giving elongation factor G a second chance to translocate the tRNAs correctly. Binds to ribosomes in a GTP-dependent manner. The protein is Elongation factor 4 of Shewanella amazonensis (strain ATCC BAA-1098 / SB2B).